A 346-amino-acid polypeptide reads, in one-letter code: NADH-ubiquinone oxidoreductase chain 2 (346 aa).

The next 11 membrane-spanning stretches (helical) occupy residues 3–23 (PLIL…VMAS), 25–45 (HWLM…PILM), 59–79 (YFLT…INLM), 96–116 (IIMT…FWVP), 122–142 (ISLT…MSIL), 149–169 (INLN…GWGG), 178–198 (IMAY…VYNP), 200–220 (LTML…MLFI), 237–257 (APLI…LPPL), 274–294 (SSII…YFYM), and 322–342 (ITLL…TPML).

The protein belongs to the complex I subunit 2 family. As to quaternary structure, core subunit of respiratory chain NADH dehydrogenase (Complex I) which is composed of 45 different subunits. Interacts with TMEM242.

It localises to the mitochondrion inner membrane. It catalyses the reaction a ubiquinone + NADH + 5 H(+)(in) = a ubiquinol + NAD(+) + 4 H(+)(out). In terms of biological role, core subunit of the mitochondrial membrane respiratory chain NADH dehydrogenase (Complex I) which catalyzes electron transfer from NADH through the respiratory chain, using ubiquinone as an electron acceptor. Essential for the catalytic activity and assembly of complex I. The protein is NADH-ubiquinone oxidoreductase chain 2 of Equus asinus (Donkey).